Consider the following 385-residue polypeptide: Glucans biosynthesis protein C (385 aa).

A run of 10 helical transmembrane segments spans residues 17-37 (AWLM…SHTW), 60-80 (MLVF…RYPL), 91-111 (VGIP…IMLQ), 137-157 (ISHL…VWIF), 173-193 (KFSM…YAVI), 212-232 (FIVM…LAFI), 239-259 (LFTT…VAYL), 274-294 (TESV…FSFG), 311-331 (ASLF…AYIT), and 338-358 (WLGF…LYEI).

This sequence belongs to the acyltransferase 3 family. OpgC subfamily.

It is found in the cell membrane. Its pathway is glycan metabolism; osmoregulated periplasmic glucan (OPG) biosynthesis. Its function is as follows. Necessary for the succinyl substitution of periplasmic glucans. Could catalyze the transfer of succinyl residues from the cytoplasmic side of the membrane to the nascent glucan backbones on the periplasmic side of the membrane. The sequence is that of Glucans biosynthesis protein C from Shigella boydii serotype 4 (strain Sb227).